Here is a 121-residue protein sequence, read N- to C-terminus: HTH-type transcriptional regulator Rv1152 (121 aa).

The 69-residue stretch at 15–83 (KPLFDQLRTQ…GRFGTFISRF (69 aa)) folds into the HTH gntR-type domain. The H-T-H motif DNA-binding region spans 43 to 62 (VRDLAGQLGVAANTVARAYR).

It is found in the cytoplasm. It localises to the secreted. The protein localises to the cell wall. Its function is as follows. Transcriptional regulator that modulates resistance to vancomycin and aminoglycosides. Negatively regulates the expression of several genes responsive to vancomycin, resulting in decreased susceptibility of bacteria to vancomycin. Negatively regulates the expression of genes encoding the ribosome binding protein Hsp, the small subunit of sulfate adenylyltransferase CysD, the L-lysine-epsilon aminotransferase LAT and the protease HtpX. Also modulates purine metabolism and aminoglycoside antibiotic resistance. Negatively regulates the expression of purine metabolism-related genes and the accumulation of purine metabolites, which affects aminoglycoside antibiotic resistance. This chain is HTH-type transcriptional regulator Rv1152, found in Mycobacterium tuberculosis (strain ATCC 25618 / H37Rv).